Consider the following 297-residue polypeptide: uncharacterized protein (297 aa).

A disordered region spans residues 175–199 (VLPTNRNNPVRSNVDIKPVNPPSSK). Residues 176-185 (LPTNRNNPVR) are compositionally biased toward polar residues. Asn269 carries an N-linked (GlcNAc...) asparagine; by host glycan. Residues 277–297 (LFGSPVLLICVASLLLLIIIL) traverse the membrane as a helical segment.

Belongs to the ascovirus HvAV ORF18 family.

The protein localises to the membrane. This is an uncharacterized protein from Noctuidae (owlet moths).